The following is a 193-amino-acid chain: Putative zinc finger protein 726P1 (193 aa).

A C2H2-type 1; degenerate zinc finger spans residues 18–40; that stretch reads YKCKKCGKTFNWSSILTNNKKIH. The C2H2-type 2; atypical zinc-finger motif lies at 46–68; sequence YKCEECGKAFKQHSTLTTHKIIC. The C2H2-type 3; degenerate zinc finger occupies 74-96; it reads YRCEECGKAFCQPSTLTRYKRMH. The C2H2-type 4 zinc finger occupies 102–124; it reads YKCEECGKAFTQFSTLTKHKRIH. The C2H2-type 5; degenerate zinc-finger motif lies at 130–152; it reads YKCEESGKAFIWSSGLTEHRRVH. The C2H2-type 6 zinc finger occupies 158 to 180; sequence YKCEECGKALIQFSTLTRHKRIH.

The sequence is that of Putative zinc finger protein 726P1 (ZNF726P1) from Homo sapiens (Human).